The sequence spans 152 residues: MARVESFELDHNTVKAPYVRLAGTEQNGDALVEKYDLRFLQPNKDALPTGALHTLEHLLAVNMRDELKGIIDISPMGCRTGFYMIMWDQHSPQEIRDALVNVLNKVINTEVVPAVSAKECGNYKDHSLFAAKEYAKIVLDQGISLDPFERIL.

The Fe cation site is built by His53, His57, and Cys120.

This sequence belongs to the LuxS family. As to quaternary structure, homodimer. Fe cation is required as a cofactor.

The enzyme catalyses S-(5-deoxy-D-ribos-5-yl)-L-homocysteine = (S)-4,5-dihydroxypentane-2,3-dione + L-homocysteine. In terms of biological role, involved in the synthesis of autoinducer 2 (AI-2) which is secreted by bacteria and is used to communicate both the cell density and the metabolic potential of the environment. The regulation of gene expression in response to changes in cell density is called quorum sensing. Catalyzes the transformation of S-ribosylhomocysteine (RHC) to homocysteine (HC) and 4,5-dihydroxy-2,3-pentadione (DPD). This is S-ribosylhomocysteine lyase from Enterococcus faecalis (strain ATCC 700802 / V583).